The following is a 173-amino-acid chain: SKP1-like protein 1 (173 aa).

Residues isoleucine 115 to glutamate 173 are interaction with the F-box domain of F-box proteins.

The protein belongs to the SKP1 family. As to quaternary structure, part of a SCF (SKP1-CUL1-F-box protein) E3 ubiquitin-protein ligase complex. Interacts directly with MOF (via F-box domain). Interacts with rice black streaked dwarf virus RBSDV protein P7-2. Is able to form the SCF complex together with CUL1 and the viral P7-2 protein. Interacts with D3.

The protein localises to the nucleus. It participates in protein modification; protein ubiquitination. Functionally, involved in ubiquitination and subsequent proteasomal degradation of target proteins. Together with CUL1, a RING-box and a F-box protein, it forms a SCF E3 ubiquitin ligase complex. The functional specificity of this complex depends on the type of F-box protein. In the SCF complex, it serves as an adapter that links the F-box protein to CUL1. In Oryza sativa subsp. japonica (Rice), this protein is SKP1-like protein 1.